A 293-amino-acid polypeptide reads, in one-letter code: Probable chromosome 2-partitioning protein ParB (293 aa).

It belongs to the ParB family.

Functionally, involved in chromosome partition. Localize to both poles of the predivisional cell following completion of DNA replication. Binds to the DNA origin of replication. This Deinococcus radiodurans (strain ATCC 13939 / DSM 20539 / JCM 16871 / CCUG 27074 / LMG 4051 / NBRC 15346 / NCIMB 9279 / VKM B-1422 / R1) protein is Probable chromosome 2-partitioning protein ParB (parB2).